The primary structure comprises 483 residues: Glutamate--tRNA ligase (483 aa).

The 'HIGH' region signature appears at 14–24; the sequence is PSPTGDPHVGT. The 'KMSKS' region motif lies at 253–257; it reads KISKR. An ATP-binding site is contributed by Lys256.

This sequence belongs to the class-I aminoacyl-tRNA synthetase family. Glutamate--tRNA ligase type 1 subfamily. Monomer.

The protein localises to the cytoplasm. The catalysed reaction is tRNA(Glu) + L-glutamate + ATP = L-glutamyl-tRNA(Glu) + AMP + diphosphate. Functionally, catalyzes the attachment of glutamate to tRNA(Glu) in a two-step reaction: glutamate is first activated by ATP to form Glu-AMP and then transferred to the acceptor end of tRNA(Glu). This Deinococcus radiodurans (strain ATCC 13939 / DSM 20539 / JCM 16871 / CCUG 27074 / LMG 4051 / NBRC 15346 / NCIMB 9279 / VKM B-1422 / R1) protein is Glutamate--tRNA ligase.